The following is a 152-amino-acid chain: UPF0266 membrane protein YobD (152 aa).

3 helical membrane passes run 6–26 (LVLI…QFIM), 45–65 (IDSV…VTNH), and 67–87 (AQIT…IFWI).

The protein belongs to the UPF0266 family.

Its subcellular location is the cell inner membrane. This is UPF0266 membrane protein YobD from Escherichia fergusonii (strain ATCC 35469 / DSM 13698 / CCUG 18766 / IAM 14443 / JCM 21226 / LMG 7866 / NBRC 102419 / NCTC 12128 / CDC 0568-73).